The chain runs to 389 residues: tRNA N(3)-cytidine methyltransferase METTL2 (389 aa).

The tract at residues 1-20 (MAASFPEGVPETEDGKRPQF) is disordered. Positions 78, 82, 181, 206, 232, 233, and 253 each coordinate S-adenosyl-L-methionine.

The protein belongs to the methyltransferase superfamily. METL family. Monomer. Interacts with DALRD3.

The protein localises to the cytoplasm. It catalyses the reaction cytidine(32) in tRNA(Thr) + S-adenosyl-L-methionine = N(3)-methylcytidine(32) in tRNA(Thr) + S-adenosyl-L-homocysteine + H(+). The catalysed reaction is cytidine(32) in tRNA(Arg)(CCU) + S-adenosyl-L-methionine = N(3)-methylcytidine(32) in tRNA(Arg)(CCU) + S-adenosyl-L-homocysteine + H(+). Functionally, S-adenosyl-L-methionine-dependent methyltransferase that mediates N(3)-methylcytidine modification of residue 32 of the tRNA anticodon loop of tRNA(Thr)(UGU) and tRNA(Arg)(CCU). N(3)-methylcytidine methylation by METTL2 requires the N6-threonylcarbamoylation of tRNA (t6A37) by the EKC/KEOPS complex as prerequisite. In Mus musculus (Mouse), this protein is tRNA N(3)-cytidine methyltransferase METTL2.